Reading from the N-terminus, the 266-residue chain is Undecaprenyl-diphosphatase (266 aa).

The next 8 helical transmembrane spans lie at 1–21 (MTLL…FLPV), 40–60 (LPLY…LVVL), 90–110 (LLVV…KPIF), 113–133 (LNQP…LWFT), 145–165 (LSWL…IPGI), 188–208 (FSFL…IDEV), 217–237 (PLLG…LWLF), and 245–265 (FKWF…KVAM).

Belongs to the UppP family.

Its subcellular location is the cell inner membrane. The enzyme catalyses di-trans,octa-cis-undecaprenyl diphosphate + H2O = di-trans,octa-cis-undecaprenyl phosphate + phosphate + H(+). Functionally, catalyzes the dephosphorylation of undecaprenyl diphosphate (UPP). Confers resistance to bacitracin. The protein is Undecaprenyl-diphosphatase of Acaryochloris marina (strain MBIC 11017).